A 76-amino-acid polypeptide reads, in one-letter code: MSSGALLPKPQMHDPLSKRLWVHIVGAFIVDLGVAAAHKFGAAKPRKKAYADFYRNHDPMKDFDEMRKAGVFRSVK.

Residues 4-14 (GALLPKPQMHD) are Mitochondrial matrix-facing. The helical transmembrane segment at 15-55 (PLSKRLWVHIVGAFIVDLGVAAAHKFGAAKPRKKAYADFYR) threads the bilayer. The Mitochondrial intermembrane segment spans residues 56 to 76 (NHDPMKDFDEMRKAGVFRSVK).

Belongs to the cytochrome c oxidase subunit 6c family. In terms of assembly, component of the cytochrome c oxidase (complex IV, CIV), a multisubunit enzyme composed of 14 subunits. The complex is composed of a catalytic core of 3 subunits MT-CO1, MT-CO2 and MT-CO3, encoded in the mitochondrial DNA, and 11 supernumerary subunits COX4I, COX5A, COX5B, COX6A, COX6B, COX6C, COX7A, COX7B, COX7C, COX8 and NDUFA4, which are encoded in the nuclear genome. The complex exists as a monomer or a dimer and forms supercomplexes (SCs) in the inner mitochondrial membrane with NADH-ubiquinone oxidoreductase (complex I, CI) and ubiquinol-cytochrome c oxidoreductase (cytochrome b-c1 complex, complex III, CIII), resulting in different assemblies (supercomplex SCI(1)III(2)IV(1) and megacomplex MCI(2)III(2)IV(2)).

Its subcellular location is the mitochondrion inner membrane. It functions in the pathway energy metabolism; oxidative phosphorylation. In terms of biological role, component of the cytochrome c oxidase, the last enzyme in the mitochondrial electron transport chain which drives oxidative phosphorylation. The respiratory chain contains 3 multisubunit complexes succinate dehydrogenase (complex II, CII), ubiquinol-cytochrome c oxidoreductase (cytochrome b-c1 complex, complex III, CIII) and cytochrome c oxidase (complex IV, CIV), that cooperate to transfer electrons derived from NADH and succinate to molecular oxygen, creating an electrochemical gradient over the inner membrane that drives transmembrane transport and the ATP synthase. Cytochrome c oxidase is the component of the respiratory chain that catalyzes the reduction of oxygen to water. Electrons originating from reduced cytochrome c in the intermembrane space (IMS) are transferred via the dinuclear copper A center (CU(A)) of subunit 2 and heme A of subunit 1 to the active site in subunit 1, a binuclear center (BNC) formed by heme A3 and copper B (CU(B)). The BNC reduces molecular oxygen to 2 water molecules using 4 electrons from cytochrome c in the IMS and 4 protons from the mitochondrial matrix. The protein is Cytochrome c oxidase subunit 6C-1 (Cox6c1) of Rattus norvegicus (Rat).